Here is a 278-residue protein sequence, read N- to C-terminus: Phosphatidylglycerol--prolipoprotein diacylglyceryl transferase (278 aa).

4 helical membrane passes run 18 to 38 (IQVH…TILA), 55 to 75 (LILW…VIFE), 90 to 110 (WDGG…VYLF), and 115 to 135 (WIPV…AQGI). Arginine 137 provides a ligand contact to a 1,2-diacyl-sn-glycero-3-phospho-(1'-sn-glycerol). Transmembrane regions (helical) follow at residues 177-197 (QPTF…LMSL), 207-227 (GEVF…VEGM), and 237-257 (IRVS…ILVF).

Belongs to the Lgt family.

It localises to the cell membrane. The enzyme catalyses L-cysteinyl-[prolipoprotein] + a 1,2-diacyl-sn-glycero-3-phospho-(1'-sn-glycerol) = an S-1,2-diacyl-sn-glyceryl-L-cysteinyl-[prolipoprotein] + sn-glycerol 1-phosphate + H(+). It participates in protein modification; lipoprotein biosynthesis (diacylglyceryl transfer). Functionally, catalyzes the transfer of the diacylglyceryl group from phosphatidylglycerol to the sulfhydryl group of the N-terminal cysteine of a prolipoprotein, the first step in the formation of mature lipoproteins. This Pediococcus pentosaceus (strain ATCC 25745 / CCUG 21536 / LMG 10740 / 183-1w) protein is Phosphatidylglycerol--prolipoprotein diacylglyceryl transferase.